Here is a 287-residue protein sequence, read N- to C-terminus: UPF0725 protein At1g19060 (287 aa).

Belongs to the UPF0725 (EMB2204) family.

The polypeptide is UPF0725 protein At1g19060 (Arabidopsis thaliana (Mouse-ear cress)).